The following is a 275-amino-acid chain: Autophagy protein 5 (275 aa).

Methionine 1 bears the N-acetylmethionine mark. Lysine 130 participates in a covalent cross-link: Glycyl lysine isopeptide (Lys-Gly) (interchain with G-Cter in ATG12).

This sequence belongs to the ATG5 family. As to quaternary structure, forms a conjugate with ATG12. Part of the minor complex composed of 4 sets of ATG12-ATG5 and ATG16L1 (400 kDa); this complex interacts with ATG3 leading to disruption of ATG7 interaction and promotion of ATG8-like proteins lipidation. Forms an 800-kDa complex composed of ATG12-ATG5 and ATG16L2. The ATG12-ATG5 conjugate interacts with RAB33A; this interaction is bridged by ATG16L1 and promotes ATG12-ATG5-ATG16L1 complex recruitment to phagophores. Interacts with TECPR1; the interaction is direct and does not take place when ATG16L1 is associated with the ATG5-ATG12 conjugate. Interacts with DHX58/RIG-1, IFIH1/MDA5 and MAVS/IPS-1 in monomeric form as well as in ATG12-ATG5 conjugate form. The interaction with MAVS is further enhanced upon vesicular stomatitis virus (VSV) infection. Interacts with ATG3. Interacts with ATG7 and ATG10. Interacts with FADD. Interacts with Bassoon/BSN; this interaction is important for the regulation of presynaptic autophagy. Interacts with ATG16L2. Conjugated to ATG12; which is essential for autophagy, but is not required for association with isolation membrane. In terms of processing, acetylated by EP300.

The protein resides in the cytoplasm. The protein localises to the preautophagosomal structure membrane. Involved in autophagic vesicle formation. Conjugation with ATG12, through a ubiquitin-like conjugating system involving ATG7 as an E1-like activating enzyme and ATG10 as an E2-like conjugating enzyme, is essential for its function. The ATG12-ATG5 conjugate acts as an E3-like enzyme which is required for lipidation of ATG8 family proteins and their association to the vesicle membranes. Involved in mitochondrial quality control after oxidative damage, and in subsequent cellular longevity. Plays a critical role in multiple aspects of lymphocyte development and is essential for both B and T lymphocyte survival and proliferation. Required for optimal processing and presentation of antigens for MHC II. Involved in the maintenance of axon morphology and membrane structures, as well as in normal adipocyte differentiation. Promotes primary ciliogenesis through removal of OFD1 from centriolar satellites and degradation of IFT20 via the autophagic pathway. As part of the ATG8 conjugation system with ATG12 and ATG16L1, required for recruitment of LRRK2 to stressed lysosomes and induction of LRRK2 kinase activity in response to lysosomal stress. Functionally, may play an important role in the apoptotic process, possibly within the modified cytoskeleton. Its expression is a relatively late event in the apoptotic process, occurring downstream of caspase activity. Plays a crucial role in IFN-gamma-induced autophagic cell death by interacting with FADD. In Bos taurus (Bovine), this protein is Autophagy protein 5.